A 542-amino-acid chain; its full sequence is Calcium-dependent protein kinase 7 (542 aa).

Gly2 is lipidated: N-myristoyl glycine. A Protein kinase domain is found at 79–337; that stretch reads YIIGRKLGQG…AHEVLRHPWI (259 aa). ATP contacts are provided by residues 85-93 and Lys108; that span reads LGQGQFGTT. Catalysis depends on Asp203, which acts as the Proton acceptor. Residues 343–373 are autoinhibitory domain; sequence ATDQALDPSVISRLKQFSAMNKLKKLALRVI. An EF-hand 1 domain is found at 380-415; the sequence is EEIAGLREMFKAVDTKNRGVITFGELREGLRRFGAE. Ca(2+) contacts are provided by Asp393, Glu404, Asp431, Asn433, Thr435, Glu440, Asp465, Asp467, Ser469, Tyr471, Lys476, Asp499, Asn501, Asp503, Gln505, and Glu510. One can recognise an EF-hand 2; degenerate domain in the interval 416-451; it reads FKDTEIGDIMEAAHNDNNVTIHYEEFIAATLPLNKI. EF-hand domains lie at 452 to 487 and 488 to 521; these read EREEHLLAAFTYFDKDGSGYITVDKLQRACGEHNME and DSLLEEIISEVDQNNDGQIDYAEFVAMMQGSNVG.

Belongs to the protein kinase superfamily. Ser/Thr protein kinase family. CDPK subfamily. As to expression, expressed in roots. Expressed in leaf sheaths.

The protein resides in the membrane. Its subcellular location is the cytoplasm. The protein localises to the cytosol. It catalyses the reaction L-seryl-[protein] + ATP = O-phospho-L-seryl-[protein] + ADP + H(+). The enzyme catalyses L-threonyl-[protein] + ATP = O-phospho-L-threonyl-[protein] + ADP + H(+). Its activity is regulated as follows. Activated by calcium. Autophosphorylation may play an important role in the regulation of the kinase activity. Its function is as follows. May play a role in signal transduction pathways that involve calcium as a second messenger. May be a signaling component in the response to gibberellin and cold stress. The chain is Calcium-dependent protein kinase 7 from Oryza sativa subsp. japonica (Rice).